Here is a 130-residue protein sequence, read N- to C-terminus: Small ribosomal subunit protein uS9 (130 aa).

This sequence belongs to the universal ribosomal protein uS9 family.

The chain is Small ribosomal subunit protein uS9 from Sodalis glossinidius (strain morsitans).